We begin with the raw amino-acid sequence, 224 residues long: MMFLWWLLLLGTAISHKVHSQEQPLLEEDTAPADNLDVLEKAKGILIRSFLEGFQEGQQINRDLPDAMEMIYKRQHPGKRFQEEIEKRQHPGKRDLEDLQLSKRQHPGRRYLEDMEKRQHPGKREEGDWSRGYLTDDSGYLDLFSDVSKRQHPGKRVPDPFFIKRQHPGKRGIEEEDDTEFENSKEVGKRQHPGKRYDPCEGPNAYNCNSGNLQLDSVEEGWAA.

A signal peptide spans 1–15; sequence MMFLWWLLLLGTAIS. Glutamine 75 is subject to Pyrrolidone carboxylic acid. Proline 77 is subject to Proline amide. Over residues 86-101 the composition is skewed to basic and acidic residues; it reads EKRQHPGKRDLEDLQL. 2 disordered regions span residues 86–131 and 150–212; these read EKRQ…DWSR and RQHP…NSGN. At glutamine 89 the chain carries Pyrrolidone carboxylic acid. A Proline amide modification is found at proline 91. Residue glutamine 105 is modified to Pyrrolidone carboxylic acid. Residue proline 107 is modified to Proline amide. A compositionally biased stretch (basic and acidic residues) spans 110–129; it reads RYLEDMEKRQHPGKREEGDW. Glutamine 119 bears the Pyrrolidone carboxylic acid mark. Proline 121 carries the post-translational modification Proline amide. Pyrrolidone carboxylic acid is present on glutamine 151. Proline 153 is subject to Proline amide. Residue glutamine 166 is modified to Pyrrolidone carboxylic acid. At proline 168 the chain carries Proline amide. A compositionally biased stretch (basic and acidic residues) spans 182 to 199; that stretch reads ENSKEVGKRQHPGKRYDP. The residue at position 191 (glutamine 191) is a Pyrrolidone carboxylic acid. Proline 193 is subject to Proline amide.

Belongs to the TRH family.

It is found in the secreted. The chain is Pro-thyrotropin-releasing hormone-B (trh-b) from Xenopus laevis (African clawed frog).